Here is a 49-residue protein sequence, read N- to C-terminus: Protein OPG059 (49 aa).

A topological domain (virion surface) is located at residue Met1. Residues Val2 to Val22 traverse the membrane as a helical segment. Residues Leu23–Tyr49 are Intravirion-facing.

This sequence belongs to the orthopoxvirus OPG058 family.

It localises to the virion membrane. The protein resides in the host membrane. May play a role in cell adhesion and is important for virus virulence in vivo, although it is not required for the virus life cycle in cell cultures. This is Protein OPG059 (OPG059) from Vaccinia virus (strain Western Reserve) (VACV).